Here is a 427-residue protein sequence, read N- to C-terminus: Dihydrofolate synthetase (427 aa).

Position 34-37 (34-37 (GKGS)) interacts with ATP. Residues Glu123 and His153 each contribute to the Mg(2+) site. 2 residues coordinate ATP: Arg275 and Asp296.

Belongs to the folylpolyglutamate synthase family.

Its subcellular location is the cytoplasm. It catalyses the reaction 7,8-dihydropteroate + L-glutamate + ATP = 7,8-dihydrofolate + ADP + phosphate + H(+). The protein operates within cofactor biosynthesis; tetrahydrofolylpolyglutamate biosynthesis. Its function is as follows. Glutamate-adding enzyme which catalyzes the binding of the first glutamyl side chain to dihydropteroate. Leads to the de nove synthesis of tetrahydrofolate. In Saccharomyces cerevisiae (strain ATCC 204508 / S288c) (Baker's yeast), this protein is Dihydrofolate synthetase (FOL3).